The primary structure comprises 127 residues: Thioredoxin (127 aa).

The region spanning 2 to 115 (SDGVKHINSA…LRAAAEKMGR (114 aa)) is the Thioredoxin domain. Catalysis depends on nucleophile residues Cys33 and Cys36. Cys33 and Cys36 are oxidised to a cystine.

This sequence belongs to the thioredoxin family.

Functionally, participates in various redox reactions through the reversible oxidation of its active center dithiol to a disulfide and catalyzes dithiol-disulfide exchange reactions. The sequence is that of Thioredoxin (trx) from Neurospora crassa (strain ATCC 24698 / 74-OR23-1A / CBS 708.71 / DSM 1257 / FGSC 987).